Consider the following 498-residue polypeptide: ATP synthase subunit beta, chloroplastic (498 aa).

At Thr-6 the chain carries Phosphothreonine. Ser-13 is subject to Phosphoserine. 172 to 179 (GGAGVGKT) provides a ligand contact to ATP.

Belongs to the ATPase alpha/beta chains family. In terms of assembly, F-type ATPases have 2 components, CF(1) - the catalytic core - and CF(0) - the membrane proton channel. CF(1) has five subunits: alpha(3), beta(3), gamma(1), delta(1), epsilon(1). CF(0) has four main subunits: a(1), b(1), b'(1) and c(9-12).

It localises to the plastid. It is found in the chloroplast thylakoid membrane. It catalyses the reaction ATP + H2O + 4 H(+)(in) = ADP + phosphate + 5 H(+)(out). Functionally, produces ATP from ADP in the presence of a proton gradient across the membrane. The catalytic sites are hosted primarily by the beta subunits. This chain is ATP synthase subunit beta, chloroplastic, found in Olimarabidopsis pumila (Dwarf rocket).